The primary structure comprises 178 residues: Ribosome maturation factor RimM (178 aa).

Positions 101–178 constitute a PRC barrel domain; that stretch reads ADEYYWYQLV…VMRVEWDADF (78 aa).

Belongs to the RimM family. Binds ribosomal protein uS19.

The protein localises to the cytoplasm. In terms of biological role, an accessory protein needed during the final step in the assembly of 30S ribosomal subunit, possibly for assembly of the head region. Essential for efficient processing of 16S rRNA. May be needed both before and after RbfA during the maturation of 16S rRNA. It has affinity for free ribosomal 30S subunits but not for 70S ribosomes. In Pseudomonas putida (strain GB-1), this protein is Ribosome maturation factor RimM.